Reading from the N-terminus, the 237-residue chain is Demethylmenaquinone methyltransferase (237 aa).

S-adenosyl-L-methionine is bound by residues T58, D79, and 106–107 (NA).

This sequence belongs to the class I-like SAM-binding methyltransferase superfamily. MenG/UbiE family.

It catalyses the reaction a 2-demethylmenaquinol + S-adenosyl-L-methionine = a menaquinol + S-adenosyl-L-homocysteine + H(+). Its pathway is quinol/quinone metabolism; menaquinone biosynthesis; menaquinol from 1,4-dihydroxy-2-naphthoate: step 2/2. In terms of biological role, methyltransferase required for the conversion of demethylmenaquinol (DMKH2) to menaquinol (MKH2). The chain is Demethylmenaquinone methyltransferase from Listeria monocytogenes serotype 4a (strain HCC23).